A 189-amino-acid polypeptide reads, in one-letter code: Endoribonuclease YbeY (189 aa).

A compositionally biased stretch (polar residues) spans 1 to 10 (MKERSSSPGT). The interval 1–23 (MKERSSSPGTPDSGRRARPKPAK) is disordered. Zn(2+)-binding residues include H141, H145, and H151.

The protein belongs to the endoribonuclease YbeY family. Zn(2+) serves as cofactor.

It is found in the cytoplasm. Functionally, single strand-specific metallo-endoribonuclease involved in late-stage 70S ribosome quality control and in maturation of the 3' terminus of the 16S rRNA. This is Endoribonuclease YbeY from Nitrosospira multiformis (strain ATCC 25196 / NCIMB 11849 / C 71).